A 426-amino-acid chain; its full sequence is MTISQDLFARAQASIPGGVNSPVRAFNGVGGTPLFITKAEGAFTFDADGNRYIDYVGSWGPMIMGHNHPAIKQAVHDAVENGLSYGAPTEAEILMAEKVKELVPSIEKVRMVSSGTEATMSAIRLARGFTGRDKILKFEGCYHGHADSLLVKAGSGALTMGVPNSPGIPEDFAKHTLTVSFNNLDEVKAIFAKYADEIACIIVEPVAGNMNCIPPVPGFLEGLRDVCDEYKSVLIFDEVMTGFRVALGGAQAYYNIKPDLTCLGKVIGGGMPVGAFGGKTEIMDYIAPVGPVYQAGTLSGNPIAMAAGLKSLELLSEPGLHAKLEATSKAICEGFEAGAKKAGIALTTNYAGGMYGFFFTDAEKVTTYKQATECDLERFKRFFHLMLEEGVYLAPSAFEAGFVCAAHNEQEIKDTIAAAERAFAKL.

Lys265 carries the post-translational modification N6-(pyridoxal phosphate)lysine.

The protein belongs to the class-III pyridoxal-phosphate-dependent aminotransferase family. HemL subfamily. In terms of assembly, homodimer. Requires pyridoxal 5'-phosphate as cofactor.

The protein resides in the cytoplasm. The catalysed reaction is (S)-4-amino-5-oxopentanoate = 5-aminolevulinate. It participates in porphyrin-containing compound metabolism; protoporphyrin-IX biosynthesis; 5-aminolevulinate from L-glutamyl-tRNA(Glu): step 2/2. In Pseudoalteromonas translucida (strain TAC 125), this protein is Glutamate-1-semialdehyde 2,1-aminomutase.